A 300-amino-acid chain; its full sequence is Ribosomal protein L11 methyltransferase (300 aa).

The S-adenosyl-L-methionine site is built by threonine 152, glycine 173, aspartate 195, and asparagine 234.

Belongs to the methyltransferase superfamily. PrmA family.

The protein resides in the cytoplasm. It carries out the reaction L-lysyl-[protein] + 3 S-adenosyl-L-methionine = N(6),N(6),N(6)-trimethyl-L-lysyl-[protein] + 3 S-adenosyl-L-homocysteine + 3 H(+). In terms of biological role, methylates ribosomal protein L11. The polypeptide is Ribosomal protein L11 methyltransferase (Burkholderia cenocepacia (strain HI2424)).